Consider the following 199-residue polypeptide: MAISKNLPILKNHFRKHWQERVKVHFDQAGKKVSRRNARATRAAKIAPRPLDLLRPVVRAPTVKYNRKVRAGRGFTLAEVKAAGLTAAYARTIGIAVDHRRQNRNQEIFDANVQRLKEYQSKIIVFPRNGKAPEAEQVLSAAATFPIAQPATDVEARAVQDNGESAFRTLRLARSEKKFRGIREKRAREKAEAEAEKKK.

Residues Thr-144 and Thr-152 each carry the phosphothreonine modification.

Belongs to the eukaryotic ribosomal protein eL13 family. In terms of assembly, component of the large ribosomal subunit (LSU). Mature yeast ribosomes consist of a small (40S) and a large (60S) subunit. The 40S small subunit contains 1 molecule of ribosomal RNA (18S rRNA) and 33 different proteins (encoded by 57 genes). The large 60S subunit contains 3 rRNA molecules (25S, 5.8S and 5S rRNA) and 46 different proteins (encoded by 81 genes).

It is found in the cytoplasm. In terms of biological role, component of the ribosome, a large ribonucleoprotein complex responsible for the synthesis of proteins in the cell. The small ribosomal subunit (SSU) binds messenger RNAs (mRNAs) and translates the encoded message by selecting cognate aminoacyl-transfer RNA (tRNA) molecules. The large subunit (LSU) contains the ribosomal catalytic site termed the peptidyl transferase center (PTC), which catalyzes the formation of peptide bonds, thereby polymerizing the amino acids delivered by tRNAs into a polypeptide chain. The nascent polypeptides leave the ribosome through a tunnel in the LSU and interact with protein factors that function in enzymatic processing, targeting, and the membrane insertion of nascent chains at the exit of the ribosomal tunnel. This Saccharomyces cerevisiae (strain ATCC 204508 / S288c) (Baker's yeast) protein is Large ribosomal subunit protein eL13A.